The chain runs to 61 residues: Large ribosomal subunit protein bL32 (61 aa).

The protein belongs to the bacterial ribosomal protein bL32 family.

This Ehrlichia chaffeensis (strain ATCC CRL-10679 / Arkansas) protein is Large ribosomal subunit protein bL32.